We begin with the raw amino-acid sequence, 139 residues long: Hydrogenase maturation factor HypA (139 aa).

Histidine 2 contributes to the Ni(2+) binding site. Zn(2+)-binding residues include cysteine 73, cysteine 76, cysteine 110, and cysteine 113.

It belongs to the HypA/HybF family.

In terms of biological role, involved in the maturation of [NiFe] hydrogenases. Required for nickel insertion into the metal center of the hydrogenase. The sequence is that of Hydrogenase maturation factor HypA from Pyrococcus abyssi (strain GE5 / Orsay).